Here is a 290-residue protein sequence, read N- to C-terminus: Arylamine N-acetyltransferase 1 (290 aa).

At M1 the chain carries N-acetylmethionine. Catalysis depends on C68, which acts as the Acyl-thioester intermediate. S103 is a CoA binding site. Substrate is bound at residue 106–107 (VH). Residues H107 and D122 contribute to the active site. Y208 is a binding site for CoA.

The protein belongs to the arylamine N-acetyltransferase family.

The protein localises to the cytoplasm. The catalysed reaction is an arylamine + acetyl-CoA = an N-acetylarylamine + CoA. Participates in the detoxification of a plethora of hydrazine and arylamine drugs. Acetylates both arylamines and arylalkylamines. This is Arylamine N-acetyltransferase 1 (Nat1) from Rattus norvegicus (Rat).